The following is a 117-amino-acid chain: Ribosome-binding factor A (117 aa).

The protein belongs to the RbfA family. Monomer. Binds 30S ribosomal subunits, but not 50S ribosomal subunits or 70S ribosomes.

The protein resides in the cytoplasm. Functionally, one of several proteins that assist in the late maturation steps of the functional core of the 30S ribosomal subunit. Associates with free 30S ribosomal subunits (but not with 30S subunits that are part of 70S ribosomes or polysomes). Required for efficient processing of 16S rRNA. May interact with the 5'-terminal helix region of 16S rRNA. The protein is Ribosome-binding factor A of Leuconostoc citreum (strain KM20).